Here is a 288-residue protein sequence, read N- to C-terminus: G1/S-specific cyclin-D2 (288 aa).

One can recognise a Cyclin N-terminal domain in the interval 26–151 (LQNLLTIEER…VLGKLKWNLA (126 aa)). The tract at residues 264–288 (QHNGSKSVEDPDQATTPTDVRDVDL) is disordered. S270 is modified (phosphoserine). T279 bears the Phosphothreonine mark.

It belongs to the cyclin family. Cyclin D subfamily. In terms of assembly, interacts with either CDK4 or CDK6 protein kinase to form a serine/threonine kinase holoenzyme complex. The cyclin subunit imparts substrate specificity to the complex. Post-translationally, phosphorylation at Thr-279 by MAP kinases is required for ubiquitination and degradation by the DCX(AMBRA1) complex. In terms of processing, ubiquitinated by the DCX(AMBRA1) complex during the transition from G1 to S cell phase, leading to its degradation: ubiquitination is dependent on Thr-279 phosphorylation. The DCX(AMBRA1) complex represents the major regulator of CCND2 stability during the G1/S transition. Polyubiquitinated by the SCF(FBXL2) complex, leading to proteasomal degradation.

It localises to the nucleus. Its subcellular location is the cytoplasm. The protein resides in the nucleus membrane. Functionally, regulatory component of the cyclin D2-CDK4 (DC) complex that phosphorylates and inhibits members of the retinoblastoma (RB) protein family including RB1 and regulates the cell-cycle during G(1)/S transition. Phosphorylation of RB1 allows dissociation of the transcription factor E2F from the RB/E2F complex and the subsequent transcription of E2F target genes which are responsible for the progression through the G(1) phase. Hypophosphorylates RB1 in early G(1) phase. Cyclin D-CDK4 complexes are major integrators of various mitogenenic and antimitogenic signals. The polypeptide is G1/S-specific cyclin-D2 (Ccnd2) (Rattus norvegicus (Rat)).